The sequence spans 419 residues: Pregnancy-specific beta-1-glycoprotein 4 (419 aa).

The first 34 residues, 1–34 (MGPLSAPPCTQRITWKGVLLTASLLNFWNPPTTA), serve as a signal peptide directing secretion. The Ig-like V-type domain maps to 35–144 (QVTIEAQPPK…TGHFTFTLHL (110 aa)). Residues Asn104, Asn111, Asn199, Asn268, Asn299, and Asn303 are each glycosylated (N-linked (GlcNAc...) asparagine). Ig-like C2-type domains are found at residues 147-234 (PKPS…VTLN), 237-327 (PKLS…VTLN), and 332-410 (PDLP…KSIT). 3 disulfides stabilise this stretch: Cys169–Cys217, Cys262–Cys310, and Cys354–Cys394.

Belongs to the immunoglobulin superfamily. CEA family.

Its subcellular location is the secreted. The polypeptide is Pregnancy-specific beta-1-glycoprotein 4 (PSG4) (Homo sapiens (Human)).